Consider the following 181-residue polypeptide: CDP-archaeol synthase (181 aa).

A run of 5 helical transmembrane segments spans residues 7–27, 55–75, 80–100, 128–148, and 150–170; these read VVVAVWAMLPAYVPNNAAVLA, AVGTAAGVALAVALNALRPAA, GVVLPAFPPAAMGTLAFGAMV, FVVVALALTALAVPAWVGDTF, and LPVLVTVAVLTPALHLLTNGI.

The protein belongs to the CDP-archaeol synthase family. Requires Mg(2+) as cofactor.

Its subcellular location is the cell membrane. It catalyses the reaction 2,3-bis-O-(geranylgeranyl)-sn-glycerol 1-phosphate + CTP + H(+) = CDP-2,3-bis-O-(geranylgeranyl)-sn-glycerol + diphosphate. The protein operates within membrane lipid metabolism; glycerophospholipid metabolism. Its function is as follows. Catalyzes the formation of CDP-2,3-bis-(O-geranylgeranyl)-sn-glycerol (CDP-archaeol) from 2,3-bis-(O-geranylgeranyl)-sn-glycerol 1-phosphate (DGGGP) and CTP. This reaction is the third ether-bond-formation step in the biosynthesis of archaeal membrane lipids. The protein is CDP-archaeol synthase of Halobacterium salinarum (strain ATCC 29341 / DSM 671 / R1).